The primary structure comprises 609 residues: Heat shock factor protein (609 aa).

The span at 1–33 shows a compositional bias: polar residues; the sequence is MIQTASTISSNGGTNQGMESSSANSPEMNGTQN. Positions 1–47 are disordered; the sequence is MIQTASTISSNGGTNQGMESSSANSPEMNGTQNSMSVGMSGSGSSQN. Over residues 34 to 45 the composition is skewed to low complexity; that stretch reads SMSVGMSGSGSS. Residues 50 to 156 mediate DNA binding; sequence ITQFSNKLYN…LLCLVTRKKA (107 aa). 4 disordered regions span residues 255–298, 310–371, 411–445, and 567–609; these read PTVS…GKYR, SSFN…TDPK, NNTSSEQHHNSYRGSVSNSQPSGNLSESTNLQPVQ, and SNGN…SIGA. Polar residues-rich tracts occupy residues 257–277, 339–360, 422–443, and 567–597; these read VSPTNEPSAHSRPSPQGTTAN, DSFNNSIDSYISPNQSPNTDVP, YRGSVSNSQPSGNLSESTNLQP, and SNGNTFGSNPVSLPNQQKSVNPSLMTVSSPR. The residue at position 350 (S350) is a Phosphoserine. The segment covering 598-609 has biased composition (basic residues); it reads QVRKKRKSSIGA.

The protein belongs to the HSF family. Homotrimer.

The protein localises to the nucleus. In terms of biological role, DNA-binding protein that specifically binds heat shock promoter elements (HSE) and activates transcription. Also required for growth at normal temperatures. The polypeptide is Heat shock factor protein (hsf1) (Schizosaccharomyces pombe (strain 972 / ATCC 24843) (Fission yeast)).